The chain runs to 2491 residues: Cation-independent mannose-6-phosphate receptor (2491 aa).

Positions 1 to 40 (MGAAAGRSPHLGPAPARRPQRSLLLLQLLLLVAAPGSTQA) are cleaved as a signal peptide. The Lumenal segment spans residues 41 to 2304 (QAAPFPELCS…MHKGLSERSQ (2264 aa)). 12 MRH domains span residues 47 to 163 (ELCS…ACKK), 172 to 320 (VPCY…ACHR), 326 to 468 (KTCS…ACVK), 473 to 619 (LLCG…ACVL), 625 to 762 (ENCT…ACPE), 765 to 924 (LECV…ACPI), 932 to 1079 (QACS…ACVP), 1082 to 1219 (VDCQ…ACPV), 1225 to 1363 (DNCE…ACPP), 1367 to 1508 (TECS…ACPM), 1514 to 1648 (DDCQ…ACEQ), and 1650 to 1797 (TECS…VCPD). 2 disulfides stabilise this stretch: Cys49–Cys69 and Cys77–Cys84. The N-linked (GlcNAc...) asparagine glycan is linked to Asn112. 8 disulfide bridges follow: Cys117–Cys149, Cys134–Cys161, Cys174–Cys212, Cys228–Cys235, Cys275–Cys306, Cys288–Cys318, Cys328–Cys366, and Cys374–Cys382. N-linked (GlcNAc...) asparagine glycans are attached at residues Asn400 and Asn435. Disulfide bonds link Cys420–Cys454, Cys434–Cys466, Cys475–Cys519, and Cys531–Cys538. 2 N-linked (GlcNAc...) asparagine glycosylation sites follow: Asn543 and Asn581. Intrachain disulfides connect Cys572/Cys605 and Cys586/Cys617. Asn626 carries N-linked (GlcNAc...) asparagine glycosylation. Cystine bridges form between Cys627/Cys664, Cys672/Cys679, Cys731/Cys760, Cys767/Cys814, and Cys823/Cys830. Residue Asn747 is glycosylated (N-linked (GlcNAc...) asparagine). N-linked (GlcNAc...) asparagine glycosylation occurs at Asn871. 7 disulfide bridges follow: Cys875–Cys910, Cys893–Cys922, Cys934–Cys970, Cys976–Cys987, Cys1042–Cys1077, Cys1084–Cys1125, and Cys1134–Cys1142. Residues Asn951 and Asn957 are each glycosylated (N-linked (GlcNAc...) asparagine). An N-linked (GlcNAc...) asparagine glycan is attached at Asn1164. 4 disulfide bridges follow: Cys1177-Cys1205, Cys1190-Cys1217, Cys1227-Cys1262, and Cys1270-Cys1282. N-linked (GlcNAc...) asparagine glycosylation occurs at Asn1246. Asn1312 is a glycosylation site (N-linked (GlcNAc...) asparagine). 24 cysteine pairs are disulfide-bonded: Cys1319/Cys1349, Cys1333/Cys1361, Cys1369/Cys1408, Cys1420/Cys1427, Cys1461/Cys1494, Cys1476/Cys1506, Cys1516/Cys1553, Cys1559/Cys1566, Cys1598/Cys1634, Cys1614/Cys1646, Cys1652/Cys1695, Cys1706/Cys1713, Cys1750/Cys1783, Cys1766/Cys1795, Cys1804/Cys1839, Cys1850/Cys1856, Cys1893/Cys1975, Cys1903/Cys1927, Cys1917/Cys1942, Cys1957/Cys1987, Cys1994/Cys2029, Cys2039/Cys2046, Cys2082/Cys2113, and Cys2096/Cys2125. Asn1656 carries an N-linked (GlcNAc...) asparagine glycan. Asn1757 is a glycosylation site (N-linked (GlcNAc...) asparagine). One can recognise a Fibronectin type-II domain in the interval 1802–1989 (DGCTLTDEQL…EWKTKVVCPP (188 aa)). Asn1816 carries N-linked (GlcNAc...) asparagine glycosylation. 2 consecutive MRH domains span residues 1992–2127 (LECK…ACAV) and 2135–2280 (VNGT…VCPL). N-linked (GlcNAc...) asparagine glycosylation is present at Asn2085. Asn2136 carries an N-linked (GlcNAc...) asparagine glycan. Cystine bridges form between Cys2188–Cys2194, Cys2232–Cys2266, and Cys2248–Cys2278. A helical transmembrane segment spans residues 2305 to 2327 (AVGAVLSLLLVALTCCLLALLLY). Over 2328–2491 (KKERRETVIS…DDSDEDLLHI (164 aa)) the chain is Cytoplasmic. N6-acetyllysine is present on Lys2352. Ser2409 bears the Phosphoserine mark. Residues 2424-2491 (GRGAGAESSH…DDSDEDLLHI (68 aa)) are disordered. The residue at position 2425 (Arg2425) is an Omega-N-methylarginine. A compositionally biased stretch (basic and acidic residues) spans 2444–2459 (QEREDDRVGLVRGEKA). Over residues 2464-2477 (SSSAQQKTVSSTKL) the composition is skewed to polar residues. Phosphoserine occurs at positions 2479 and 2484. Basic and acidic residues predominate over residues 2479 to 2491 (SFHDDSDEDLLHI).

Belongs to the MRL1/IGF2R family. Binds HA-I and HA-II plasma membrane adapters. Interacts with DPP4; the interaction is direct. Binds GGA1, GGA2 and GGA3. Interacts with the heterotrimeric retromer cargo-selective complex (CSC), formed by VPS26 (VPS26A or VPS26B), VPS29 and VPS35; which is involved in retrograde trafficking of the receptor from endosomes to the Golgi apparatus. Palmitoylated. Undergoes cysteine S-palmitoylation which promotes interaction with the retromer cargo-selective complex which mediates its retrograde trafficking to the Golgi apparatus.

It is found in the golgi apparatus membrane. It localises to the endosome membrane. Mediates the transport of phosphorylated lysosomal enzymes from the Golgi complex and the cell surface to lysosomes. Lysosomal enzymes bearing phosphomannosyl residues bind specifically to mannose-6-phosphate receptors in the Golgi apparatus and the resulting receptor-ligand complex is transported to an acidic prelysosomal compartment where the low pH mediates the dissociation of the complex. The receptor is then recycled back to the Golgi for another round of trafficking through its binding to the retromer. This receptor also binds IGF2. Acts as a positive regulator of T-cell coactivation by binding DPP4. The chain is Cation-independent mannose-6-phosphate receptor (IGF2R) from Homo sapiens (Human).